The chain runs to 525 residues: Beta-1,4-xylosyltransferase IRX14 (525 aa).

The Cytoplasmic segment spans residues 1-35 (MKLSALHQSYLNRRSNSFRSPTSLDSSVDGSGKSL). The chain crosses the membrane as a helical; Signal-anchor for type II membrane protein span at residues 36–56 (IAVFWLILHCLCCLISLVLGF). Residues 57–525 (RFSRLVFFFL…SSSSKHQERN (469 aa)) are Lumenal-facing. 3 N-linked (GlcNAc...) asparagine glycosylation sites follow: Asn-102, Asn-204, and Asn-326. The segment at 452–525 (RTPWPDVPPE…SSSSKHQERN (74 aa)) is disordered. Over residues 471-488 (PLSQGNTVVVIPKQQQHP) the composition is skewed to polar residues. Residues 489–503 (TKIRKPKRKSKKSKH) are compositionally biased toward basic residues. The segment covering 508-519 (TDTTTQVYSSSS) has biased composition (polar residues).

The protein belongs to the glycosyltransferase 43 family. Expressed in developing interfascicular fibers and xylem cells in stems and developing secondary xylem in roots.

Its subcellular location is the golgi apparatus membrane. It catalyses the reaction [(1-&gt;4)-beta-D-xylan](n) + UDP-alpha-D-xylose = [(1-&gt;4)-beta-D-xylan](n+1) + UDP + H(+). Involved in the synthesis of the hemicellulose glucuronoxylan, a major component of secondary cell walls. Involved in the elongation of glucuronoxylan xylosyl backbone. Xylan xylosyltransferase that acts cooperatively with IRX9 to achieve the successive addition of xylosyl residues during xylan backbone elongation. Required for the proper composition and structural properties of released seed coat mucilage. Required for the production of highly branched xylan polymers in seed coat mucilage. Xylan with xylose side chains seems to be necessary for pectin attachment to the seed surface. Together with MUCI70, required for xylan and pectin synthesis in seed coat epidermal (SCE) cells. This Arabidopsis thaliana (Mouse-ear cress) protein is Beta-1,4-xylosyltransferase IRX14.